Reading from the N-terminus, the 242-residue chain is Demethylmenaquinone methyltransferase (242 aa).

S-adenosyl-L-methionine contacts are provided by residues T62, D83, and 112–113; that span reads DV.

This sequence belongs to the class I-like SAM-binding methyltransferase superfamily. MenG/UbiE family.

The catalysed reaction is a 2-demethylmenaquinol + S-adenosyl-L-methionine = a menaquinol + S-adenosyl-L-homocysteine + H(+). Its pathway is quinol/quinone metabolism; menaquinone biosynthesis; menaquinol from 1,4-dihydroxy-2-naphthoate: step 2/2. In terms of biological role, methyltransferase required for the conversion of demethylmenaquinol (DMKH2) to menaquinol (MKH2). The polypeptide is Demethylmenaquinone methyltransferase (Protochlamydia amoebophila (strain UWE25)).